The chain runs to 447 residues: UPF0210 protein OEOE_0945 (447 aa).

The protein belongs to the UPF0210 family. Homodimer.

This Oenococcus oeni (strain ATCC BAA-331 / PSU-1) protein is UPF0210 protein OEOE_0945.